We begin with the raw amino-acid sequence, 111 residues long: Ig kappa chain V-III region PC 2413 (111 aa).

The interval D1–C23 is framework-1. C23 and C92 form a disulfide bridge. A complementarity-determining-1 region spans residues R24–H38. The segment at W39 to Y53 is framework-2. A complementarity-determining-2 region spans residues G54 to S60. Residues G61–C92 are framework-3. Residues H93–T101 form a complementarity-determining-3 region. Residues F102–E111 form a framework-4 region.

The protein is Ig kappa chain V-III region PC 2413 of Mus musculus (Mouse).